Reading from the N-terminus, the 137-residue chain is Cucumber peeling cupredoxin (137 aa).

Pyrrolidone carboxylic acid is present on Q1. The 105-residue stretch at 3-107 folds into the Phytocyanin domain; sequence TVHIVGDNTG…GQKLSINVVA (105 aa). Cu cation-binding residues include H46, C89, H94, and Q99. Residues C60 and C95 are joined by a disulfide bond. N-linked (GlcNAc...) asparagine glycosylation occurs at N109. Residues 112-137 form a disordered region; sequence VSMPPPSSSPPSSVMPPPVMPPPSPS. Residues 114-137 are compositionally biased toward pro residues; sequence MPPPSSSPPSSVMPPPVMPPPSPS. P115 carries the post-translational modification 4-hydroxyproline; partial. 4-hydroxyproline is present on residues P116, P117, P121, and P122. P127 bears the 4-hydroxyproline; partial mark. P128, P129, P133, P134, and P136 each carry 4-hydroxyproline.

The polypeptide is Cucumber peeling cupredoxin (Cucumis sativus (Cucumber)).